A 511-amino-acid polypeptide reads, in one-letter code: MDIRPAEISEILKSQIASFDSEANVAETGQVLSVGDGIARVYGLQNVMAGELVEFPSAGLKGMALNLENDNVGVVIFGDDRQIREGDTVARTREIVDVPVGRGLLGRVVDALGNPIDGKGPLTDVTRTRVEVKAPGIIPRKSVHEPMQTGLKSVDALIPIGRGQRELVIGDRQTGKTTVILDTFINQKPINQGTDESKKLYCIYVAVGQKRSTVAQIVRTLEEQGAMEYSIVVAATASDPAPMQFLAPYTGCAMGEFFRDNAMHAVIAYDDLSKQAVAYRQMSLLLRRPPGREAYPGDVFYLHSRLLERAAKMNDAHGAGSLTALPVIETQAGDVSAYIPTNVISITDGQIFLETELFFKGIRPAVNVGLSVSRVGSSAQIKAMKQVAGSIKLELAQYREMAAFAQFASDLDASTQKLLARGARLTELLKQPQFTPYPVELQVAVIFAGVKGYLDAIPTDKVVEFERRLVAELRGAQKDILDAIRNDREVKSETEAKLRSFLEGFVKNFTV.

Residue 170–177 coordinates ATP; it reads GDRQTGKT.

This sequence belongs to the ATPase alpha/beta chains family. In terms of assembly, F-type ATPases have 2 components, CF(1) - the catalytic core - and CF(0) - the membrane proton channel. CF(1) has five subunits: alpha(3), beta(3), gamma(1), delta(1), epsilon(1). CF(0) has three main subunits: a(1), b(2) and c(9-12). The alpha and beta chains form an alternating ring which encloses part of the gamma chain. CF(1) is attached to CF(0) by a central stalk formed by the gamma and epsilon chains, while a peripheral stalk is formed by the delta and b chains.

The protein localises to the cell inner membrane. The enzyme catalyses ATP + H2O + 4 H(+)(in) = ADP + phosphate + 5 H(+)(out). In terms of biological role, produces ATP from ADP in the presence of a proton gradient across the membrane. The alpha chain is a regulatory subunit. This Granulibacter bethesdensis (strain ATCC BAA-1260 / CGDNIH1) protein is ATP synthase subunit alpha.